The following is a 380-amino-acid chain: uncharacterized protein (380 aa).

Residues 256 to 301 (DKEEKIQKSYQYQTELITELQGRIAELEKENQSLKENVKEPETSKP) adopt a coiled-coil conformation.

This is an uncharacterized protein from Pasteurella multocida (strain Pm70).